A 172-amino-acid polypeptide reads, in one-letter code: Chorion protein S18 (172 aa).

The first 17 residues, 1 to 17 (MMKFMCICLCAISAVSA), serve as a signal peptide directing secretion.

The protein belongs to the chorion protein S15/S18 family.

It localises to the secreted. Its function is as follows. Chorion membrane (egg shell) protein; plays a role in protecting the egg from the environment. This Drosophila melanogaster (Fruit fly) protein is Chorion protein S18 (Cp18).